Reading from the N-terminus, the 645-residue chain is Rho GTPase-activating protein 25 (645 aa).

Positions 46 to 151 constitute a PH domain; sequence RPIKMGWLKK…WVKFLRRVAG (106 aa). The region spanning 159 to 353 is the Rho-GAP domain; the sequence is QRLDETVAYE…MMIRDHEVLF (195 aa). 2 disordered regions span residues 355 to 444 and 469 to 550; these read KSKD…QTLP and FWSP…EEEI. A phosphoserine mark is found at Ser362 and Ser395. The span at 393 to 409 shows a compositional bias: low complexity; that stretch reads TDSFSSMTSDSDTTSPT. A Phosphothreonine modification is found at Thr406. Basic and acidic residues predominate over residues 420–431; it reads DSSKVPREKPGD. Polar residues predominate over residues 487–504; sequence SQDLRQLSDSQRTSTYDN. Ser536 is subject to Phosphoserine. Positions 541-644 form a coiled coil; sequence GKKNSGEEEI…VKSMKEPKTE (104 aa).

Functionally, GTPase activator for the Rho-type GTPases by converting them to an inactive GDP-bound state. This Homo sapiens (Human) protein is Rho GTPase-activating protein 25 (ARHGAP25).